The chain runs to 203 residues: Urease accessory protein UreE (203 aa).

Positions 170 to 203 (EHHGHSHSHSHSHSHDHDHQHGPSCSHGHHHGHR) are disordered.

It belongs to the UreE family.

It localises to the cytoplasm. Functionally, involved in urease metallocenter assembly. Binds nickel. Probably functions as a nickel donor during metallocenter assembly. The chain is Urease accessory protein UreE from Burkholderia mallei (strain SAVP1).